An 81-amino-acid polypeptide reads, in one-letter code: Acyl carrier protein (81 aa).

The 79-residue stretch at M1–Q79 folds into the Carrier domain. Position 39 is an O-(pantetheine 4'-phosphoryl)serine (S39).

This sequence belongs to the acyl carrier protein (ACP) family. Post-translationally, 4'-phosphopantetheine is transferred from CoA to a specific serine of apo-ACP by AcpS. This modification is essential for activity because fatty acids are bound in thioester linkage to the sulfhydryl of the prosthetic group.

It localises to the cytoplasm. It participates in lipid metabolism; fatty acid biosynthesis. Functionally, carrier of the growing fatty acid chain in fatty acid biosynthesis. This chain is Acyl carrier protein, found in Rubrobacter xylanophilus (strain DSM 9941 / JCM 11954 / NBRC 16129 / PRD-1).